Reading from the N-terminus, the 207-residue chain is MRPLTPRQEEVLQLIKTTMLETGMPPTRAEIARHLGFKSANAAEEHLKALARKGAIEILPGTSRGIRLTEPLEDQLEDQGLPLIGRVAAGEPILAQEHVEMHYKVDPSLFKPSADFLLRVSGMSMKDIGILDGDLLAVHKTTDVHNGQVVVARVDEDVTVKRLERKGRQVVLHAENEDFQPIKVDLATQPFNIEGIAVGVIRNADWM.

Residues 28–48 (RAEIARHLGFKSANAAEEHLK) constitute a DNA-binding region (H-T-H motif). Catalysis depends on for autocatalytic cleavage activity residues S124 and K161.

This sequence belongs to the peptidase S24 family. In terms of assembly, homodimer.

The catalysed reaction is Hydrolysis of Ala-|-Gly bond in repressor LexA.. Represses a number of genes involved in the response to DNA damage (SOS response), including recA and lexA. In the presence of single-stranded DNA, RecA interacts with LexA causing an autocatalytic cleavage which disrupts the DNA-binding part of LexA, leading to derepression of the SOS regulon and eventually DNA repair. In Pseudoalteromonas atlantica (strain T6c / ATCC BAA-1087), this protein is LexA repressor.